Consider the following 534-residue polypeptide: Peptide chain release factor 3 (534 aa).

The region spanning 9 to 278 (ARRRTFAIIS…FFIEHAPPPQ (270 aa)) is the tr-type G domain. GTP contacts are provided by residues 18–25 (SHPDAGKT), 86–90 (DTPGH), and 140–143 (NKLD).

The protein belongs to the TRAFAC class translation factor GTPase superfamily. Classic translation factor GTPase family. PrfC subfamily.

Its subcellular location is the cytoplasm. Functionally, increases the formation of ribosomal termination complexes and stimulates activities of RF-1 and RF-2. It binds guanine nucleotides and has strong preference for UGA stop codons. It may interact directly with the ribosome. The stimulation of RF-1 and RF-2 is significantly reduced by GTP and GDP, but not by GMP. In Xanthomonas oryzae pv. oryzae (strain MAFF 311018), this protein is Peptide chain release factor 3.